The sequence spans 923 residues: MDGAHENAAESSSSVPRSEEPACSAGGPEVLPPEESEGCAGSLDAAPKKLCGYLSKFGGKGPIRGWKSRWFFYDERKCHLYYSRTAQDANPLDSIDLSSAVFDCKADAEEGTFEIKTPSRIITLKAATKQVMLYWLQQLQTKRWEFHSSPPAPPAAPDAAPAGNGPTLRLELEQEEEELEDFLSPVRTPPGLVGAAAALQPVPTKPLALQNISLKHLGTEIQNTMYNIRSNRQAQGTGHGPPGEDPPLSAEPQRAEWPLPSDPGTPGKDPADSPKPTPKSSLTANLIQKAKRPNNTFPLFAEGLTRTRTAQEKILALEQQVLMLTKELKSQKELVRILHKALEAAQQEKRASSAYLAAAEDKDRLELVRHKVRQIAELGKRVEALERERESLAQTAGLREQQVQELQRHVQQLLEKNQAKQQVICKLSEKVTWDFTHPPTQPPVPLGAADRDFLSQQEKMEHLKDDMEAYRTQNRFLNSEIHQVTKIWRRVAEKEKALLMKCAYLQAKNCQVESKYLAGLRRLQEAAGGEATESSELLRQLTQEALQWEAGEASADGVELSPISEYDEYGFLTVPNYEMEDLKLLAKIQALEVHSHHLLAHEAVERPLRERWAALGDLAPSVELKQLLRAGVPREHRPRVWKWLVQLRVRHLQSPGHYQELLSRGQVREHPAARQIELDLNRTFPNNKHFTCPTSTFPDKLRRVLLAFSWQNPTIGYCQGLNRLAAIALLVLEEEESAFWCLVAIVETIMPADYYSKTLTSSQVDQRVLQDLLLEKLPRLMAHLGQYRVDLSFLTFNWFLVVFADSLISNILLRVWDAFLYEGTKYNEEEILRLQDSLEIYQYLRFFTKTICNSQKLMTIAFNDMNPFPMKQLRQLRRAHRERLEAELHELEQLKAEYLETQSSRGPAVPDGCTSEDEGEGEA.

N-acetylmethionine is present on methionine 1. The segment at 1–39 (MDGAHENAAESSSSVPRSEEPACSAGGPEVLPPEESEGC) is disordered. An interaction with CADH1 region spans residues 1-171 (MDGAHENAAE…AGNGPTLRLE (171 aa)). Residues 47–144 (PKKLCGYLSK…WLQQLQTKRW (98 aa)) enclose the PH domain. 2 disordered regions span residues 146–166 (FHSS…GNGP) and 232–289 (RQAQ…LIQK). The tract at residues 301–439 (AEGLTRTRTA…KVTWDFTHPP (139 aa)) is interaction with RAC1. Residues 308–486 (RTAQEKILAL…LNSEIHQVTK (179 aa)) adopt a coiled-coil conformation. In terms of domain architecture, Rab-GAP TBC spans 631-823 (GVPREHRPRV…RVWDAFLYEG (193 aa)). Residues 870-904 (MKQLRQLRRAHRERLEAELHELEQLKAEYLETQSS) are a coiled coil. The tract at residues 900–923 (ETQSSRGPAVPDGCTSEDEGEGEA) is disordered. The segment covering 914 to 923 (TSEDEGEGEA) has biased composition (acidic residues). Residue serine 915 is modified to Phosphoserine.

As to quaternary structure, interacts with activated RAC1 and CDH1.

It is found in the cytoplasm. The protein resides in the cytoplasmic vesicle. The protein localises to the cell junction. Functionally, acts as a GTPase-activating protein for RAB7A. Signal effector acting as a linker between RAC1 and RAB7A, leading to RAB7A inactivation and subsequent inhibition of cadherin degradation and reduced cell-cell adhesion. The protein is TBC1 domain family member 2A (TBC1D2) of Ailuropoda melanoleuca (Giant panda).